A 227-amino-acid chain; its full sequence is Probable methylthioribulose-1-phosphate dehydratase (227 aa).

Position 87 (cysteine 87) interacts with substrate. The Zn(2+) site is built by histidine 105 and histidine 107. Glutamate 129 acts as the Proton donor/acceptor in catalysis. Histidine 185 is a Zn(2+) binding site.

The protein belongs to the aldolase class II family. MtnB subfamily. The cofactor is Zn(2+).

Its subcellular location is the cytoplasm. It carries out the reaction 5-(methylsulfanyl)-D-ribulose 1-phosphate = 5-methylsulfanyl-2,3-dioxopentyl phosphate + H2O. Its pathway is amino-acid biosynthesis; L-methionine biosynthesis via salvage pathway; L-methionine from S-methyl-5-thio-alpha-D-ribose 1-phosphate: step 2/6. Its function is as follows. Catalyzes the dehydration of methylthioribulose-1-phosphate (MTRu-1-P) into 2,3-diketo-5-methylthiopentyl-1-phosphate (DK-MTP-1-P). This is Probable methylthioribulose-1-phosphate dehydratase from Drosophila erecta (Fruit fly).